Here is a 493-residue protein sequence, read N- to C-terminus: MDSFPLLAALFFILAATWFISFRRPRNLPPGPFPYPIVGNMLQLGTQPHETFAKLSKKYGPLMSIHLGSLYTVIVSSPEMAKEIMHKYGQVFSGRTVAQAVHACGHDKISMGFLPVGGEWRDMRKICKEQMFSHQSMEDSQWLRKQKLQQLLEYAQKCSERGRAIDIREAAFITTLNLMSATLFSMQATEFDSKVTMEFKEIIEGVASIVGVPNFADYFPILRPFDPQGVKRRADVYFGRLLAIIEGFLNERVESRRTNPNAPKKDDFLETLVDTLQTNDNKLKTDHLTHLMLDLFVGGSETSTTEIEWIMWELLANPEKMAKMKAELKSVMGEEKVVDESQMPRLPYLQAVVKESMRLHPPGPLLLPRKAESDQVVNGYLIPKGAQVLINAWAIGRDHSIWKNPDSFEPERFLDQKIDFKGTDYELIPFGSGRRVCPGMPLANRILHTVTATLVHNFDWKLERPEASDAHRGVLFGFAVRRAVPLKIVPFKV.

The chain crosses the membrane as a helical span at residues 2–22; that stretch reads DSFPLLAALFFILAATWFISF. Heme is bound at residue Cys437.

Belongs to the cytochrome P450 family. Requires heme as cofactor. As to expression, expressed in leaf glandular trichomes.

The protein localises to the membrane. The enzyme catalyses abieta-8,11,13-triene + reduced [NADPH--hemoprotein reductase] + O2 = ferruginol + oxidized [NADPH--hemoprotein reductase] + H2O + H(+). The catalysed reaction is ferruginol + reduced [NADPH--hemoprotein reductase] + O2 = 11-hydroxyferruginol + oxidized [NADPH--hemoprotein reductase] + H2O + H(+). It carries out the reaction miltiradiene + 2 reduced [NADPH--hemoprotein reductase] + 2 O2 = 11-oxomiltiradiene + 2 oxidized [NADPH--hemoprotein reductase] + 3 H2O + 2 H(+). It functions in the pathway secondary metabolite biosynthesis; terpenoid biosynthesis. Functionally, monooxygenase involved in the biosynthesis of labdane-related diterpenes natural products. Catalyzes the oxidation of abietatriene to produce ferruginol. Catalyzes the oxidation of ferruginol at C-12 to produce 11-hydroxyferruginol. Ferruginol and 11-hydroxyferruginol are intermediates in the biosynthesis of carnosate, a potent antioxidant. May also convert miltiradiene into 11-oxomiltiradiene. The polypeptide is Ferruginol synthase 1 (Rosmarinus officinalis (Rosemary)).